We begin with the raw amino-acid sequence, 338 residues long: MPGDASMIVIGAGSYGTALAITLARNGHEVLLWGHDPAHIQALEAVRCNQAFLPDVPFPPTLRLEASLPTALAASRDVLIVVPSHVFGSVLTELKPHLRQDARIVWATKGLEAETGRLLQEVAREVLGDQIPLAVLSGPTFARELAAGLPTAIALAATDATFSADLQRLLHCGKSFRVYSNPDLIGVQLGGAVKNVIAIGAGISDGIGFGANARTALITRGLAEMSRLGAAMGAEPGTFMGMAGLGDLVLTCTDNQSRNRRFGLLLGQGVGFEAVQETIGQVVEGYRNTKEVLALAGRYGVEMPITEQIYQVLYQNKNAHQAALTLLGRAQKDERAGG.

Positions 14, 15, 35, and 109 each coordinate NADPH. Sn-glycerol 3-phosphate is bound by residues Lys109, Gly138, and Thr140. Ala142 lines the NADPH pocket. The sn-glycerol 3-phosphate site is built by Lys194, Asp247, Ser257, Arg258, and Asn259. The active-site Proton acceptor is the Lys194. An NADPH-binding site is contributed by Arg258. 2 residues coordinate NADPH: Val282 and Glu284.

This sequence belongs to the NAD-dependent glycerol-3-phosphate dehydrogenase family.

It is found in the cytoplasm. It carries out the reaction sn-glycerol 3-phosphate + NAD(+) = dihydroxyacetone phosphate + NADH + H(+). The catalysed reaction is sn-glycerol 3-phosphate + NADP(+) = dihydroxyacetone phosphate + NADPH + H(+). Its pathway is membrane lipid metabolism; glycerophospholipid metabolism. In terms of biological role, catalyzes the reduction of the glycolytic intermediate dihydroxyacetone phosphate (DHAP) to sn-glycerol 3-phosphate (G3P), the key precursor for phospholipid synthesis. The sequence is that of Glycerol-3-phosphate dehydrogenase [NAD(P)+] from Sodalis glossinidius (strain morsitans).